The primary structure comprises 236 residues: uncharacterized protein (236 aa).

Belongs to the HyuE racemase family.

The protein resides in the cytoplasm. This is an uncharacterized protein from Schizosaccharomyces pombe (strain 972 / ATCC 24843) (Fission yeast).